Consider the following 196-residue polypeptide: Imidazole glycerol phosphate synthase subunit HisH (196 aa).

Residues 2–196 (KVAVIKYNAG…ERIIKNFLEL (195 aa)) form the Glutamine amidotransferase type-1 domain. Cysteine 77 serves as the catalytic Nucleophile. Residues histidine 178 and glutamate 180 contribute to the active site.

In terms of assembly, heterodimer of HisH and HisF.

Its subcellular location is the cytoplasm. It catalyses the reaction 5-[(5-phospho-1-deoxy-D-ribulos-1-ylimino)methylamino]-1-(5-phospho-beta-D-ribosyl)imidazole-4-carboxamide + L-glutamine = D-erythro-1-(imidazol-4-yl)glycerol 3-phosphate + 5-amino-1-(5-phospho-beta-D-ribosyl)imidazole-4-carboxamide + L-glutamate + H(+). It carries out the reaction L-glutamine + H2O = L-glutamate + NH4(+). It participates in amino-acid biosynthesis; L-histidine biosynthesis; L-histidine from 5-phospho-alpha-D-ribose 1-diphosphate: step 5/9. Functionally, IGPS catalyzes the conversion of PRFAR and glutamine to IGP, AICAR and glutamate. The HisH subunit catalyzes the hydrolysis of glutamine to glutamate and ammonia as part of the synthesis of IGP and AICAR. The resulting ammonia molecule is channeled to the active site of HisF. The polypeptide is Imidazole glycerol phosphate synthase subunit HisH (Bacteroides fragilis (strain ATCC 25285 / DSM 2151 / CCUG 4856 / JCM 11019 / LMG 10263 / NCTC 9343 / Onslow / VPI 2553 / EN-2)).